The following is a 102-amino-acid chain: Large ribosomal subunit protein bL28 (102 aa).

Positions 1 to 20 (MSNSCDLTGHGWQNGNMVSH) are enriched in polar residues. Residues 1 to 27 (MSNSCDLTGHGWQNGNMVSHSNRKTKK) are disordered.

This sequence belongs to the bacterial ribosomal protein bL28 family.

The protein is Large ribosomal subunit protein bL28 of Neorickettsia sennetsu (strain ATCC VR-367 / Miyayama) (Ehrlichia sennetsu).